The following is a 314-amino-acid chain: Thymidylate synthase (314 aa).

DUMP-binding positions include arginine 21 and 176–177 (RR). The Nucleophile role is filled by cysteine 196. DUMP-binding positions include 216-219 (RSAD), asparagine 227, and 257-259 (HLY). Aspartate 219 serves as a coordination point for (6R)-5,10-methylene-5,6,7,8-tetrahydrofolate. Serine 313 lines the (6R)-5,10-methylene-5,6,7,8-tetrahydrofolate pocket.

It belongs to the thymidylate synthase family. Bacterial-type ThyA subfamily. As to quaternary structure, homodimer.

It localises to the cytoplasm. The catalysed reaction is dUMP + (6R)-5,10-methylene-5,6,7,8-tetrahydrofolate = 7,8-dihydrofolate + dTMP. It participates in pyrimidine metabolism; dTTP biosynthesis. Its function is as follows. Catalyzes the reductive methylation of 2'-deoxyuridine-5'-monophosphate (dUMP) to 2'-deoxythymidine-5'-monophosphate (dTMP) while utilizing 5,10-methylenetetrahydrofolate (mTHF) as the methyl donor and reductant in the reaction, yielding dihydrofolate (DHF) as a by-product. This enzymatic reaction provides an intracellular de novo source of dTMP, an essential precursor for DNA biosynthesis. In Listeria innocua serovar 6a (strain ATCC BAA-680 / CLIP 11262), this protein is Thymidylate synthase.